Consider the following 488-residue polypeptide: NAD-reducing hydrogenase HoxS subunit beta (488 aa).

Ni(2+) is bound by residues Cys-62, Cys-65, Cys-458, and Cys-461.

It belongs to the [NiFe]/[NiFeSe] hydrogenase large subunit family. In terms of assembly, tetramer of an alpha and a gamma subunits (flavin-containing dimer), and a delta and a nickel-containing beta subunits (hydrogenase dimer). It depends on FMN as a cofactor. Ni(2+) serves as cofactor.

It is found in the cytoplasm. The catalysed reaction is H2 + NAD(+) = NADH + H(+). This chain is NAD-reducing hydrogenase HoxS subunit beta (hoxH), found in Cupriavidus necator (strain ATCC 17699 / DSM 428 / KCTC 22496 / NCIMB 10442 / H16 / Stanier 337) (Ralstonia eutropha).